Here is a 33-residue protein sequence, read N- to C-terminus: Brevinin-2GRb (33 aa).

As to expression, expressed by the skin glands.

The protein localises to the secreted. Antimicrobial peptide active against the Gram-positive bacterium S.aureus (MIC=25 uM) and against the Gram-negative bacteria E.coli (MIC=6 uM). Has no antifungal activity against C.albicans. Shows hemolytic activity against human erythrocytes only at high concentrations (LC(50)=180 uM). The protein is Brevinin-2GRb of Odorrana grahami (Yunnanfu frog).